Reading from the N-terminus, the 811-residue chain is tRNA(Met) cytidine acetyltransferase TmcA (811 aa).

2 residues coordinate ATP: Q267 and R439. The N-acetyltransferase domain maps to 473–662 (KKEVYLEEPD…GEFTAIVLKP (190 aa)). Residues 589–591 (IAT), E629, and R636 contribute to the acetyl-CoA site.

The protein belongs to the TmcA family.

Its subcellular location is the cytoplasm. It catalyses the reaction cytidine(34) in elongator tRNA(Met) + acetyl-CoA + ATP + H2O = N(4)-acetylcytidine(34) in elongator tRNA(Met) + ADP + phosphate + CoA + H(+). It carries out the reaction a cytidine in RNA + acetyl-CoA + ATP + H2O = an N(4)-acetylcytidine in RNA + ADP + phosphate + CoA + H(+). The enzyme catalyses a cytidine in tRNA + acetyl-CoA + ATP + H2O = an N(4)-acetylcytidine in tRNA + ADP + phosphate + CoA + H(+). The catalysed reaction is a cytidine in mRNA + acetyl-CoA + ATP + H2O = an N(4)-acetylcytidine in mRNA + ADP + phosphate + CoA + H(+). Functionally, catalyzes the formation of N(4)-acetylcytidine (ac(4)C) at the wobble position of tRNA(Met), by using acetyl-CoA as an acetyl donor and ATP (or GTP). In terms of biological role, catalyzes the formation of 267 N(4)-acetylcytidine (ac(4)C) sites in RNA, almost always on the middle C of a CCG motif. Modifications are found in rRNA, ncRNA, mRNA and tRNA. More acetylation is observed at 95 than at 75 or 85 degrees Celsius. This Thermococcus sp. (strain AM4) protein is tRNA(Met) cytidine acetyltransferase TmcA.